Here is a 265-residue protein sequence, read N- to C-terminus: Adenosylcobinamide-GDP ribazoletransferase (265 aa).

The next 7 membrane-spanning stretches (helical) occupy residues 40 to 60, 67 to 87, 121 to 141, 150 to 170, 191 to 211, 213 to 233, and 243 to 263; these read IAYA…VVLV, LPAF…TGAF, GGCA…ALVA, LALV…LLAL, LACA…GFGI, TAFA…RLSG, and VAGA…LIFP.

It belongs to the CobS family. It depends on Mg(2+) as a cofactor.

The protein localises to the cell inner membrane. It catalyses the reaction alpha-ribazole + adenosylcob(III)inamide-GDP = adenosylcob(III)alamin + GMP + H(+). The enzyme catalyses alpha-ribazole 5'-phosphate + adenosylcob(III)inamide-GDP = adenosylcob(III)alamin 5'-phosphate + GMP + H(+). Its pathway is cofactor biosynthesis; adenosylcobalamin biosynthesis; adenosylcobalamin from cob(II)yrinate a,c-diamide: step 7/7. In terms of biological role, joins adenosylcobinamide-GDP and alpha-ribazole to generate adenosylcobalamin (Ado-cobalamin). Also synthesizes adenosylcobalamin 5'-phosphate from adenosylcobinamide-GDP and alpha-ribazole 5'-phosphate. This is Adenosylcobinamide-GDP ribazoletransferase from Xanthobacter autotrophicus (strain ATCC BAA-1158 / Py2).